A 261-amino-acid polypeptide reads, in one-letter code: Syntaxin-7 (261 aa).

S2 carries the post-translational modification N-acetylserine. Residues 2 to 238 (SYTPGIGGDP…NYQRKSRKTL (237 aa)) lie on the Cytoplasmic side of the membrane. A Phosphothreonine modification is found at T4. The stretch at 47 to 68 (ELRQQLQQEQQYTNQLAKETDK) forms a coiled coil. T79 is modified (phosphothreonine). A phosphoserine mark is found at S125, S126, S129, and S205. The segment at 128 to 148 (VSGGFPEDSSKEKNFVSWESQ) is disordered. Residues 165–227 (LRLIHERESS…QQANQQLSRA (63 aa)) enclose the t-SNARE coiled-coil homology domain. A helical; Anchor for type IV membrane protein transmembrane segment spans residues 239 to 259 (CIIILILVVGIVIIFFIVWGL). At 260 to 261 (KG) the chain is on the vesicular side.

This sequence belongs to the syntaxin family. Interacts with VPS11, VPS16 and VPS18. Interacts with VPS33A. Forms a SNARE complex with VTI1B, STX8 and VAMP8 which functions in the homotypic fusion of late endosomes. Component of the SNARE complex composed of STX7, STX8, VAMP7 and VTI1B that is required for heterotypic fusion of late endosomes with lysosomes. Interacts with TPC1. Detected in all tissues tested. Highest expression is found in kidney followed by lung, spleen, heart and brain. Lower expression, in skeletal muscle, liver and testis.

It is found in the early endosome membrane. Its function is as follows. May be involved in protein trafficking from the plasma membrane to the early endosome (EE) as well as in homotypic fusion of endocytic organelles. Mediates the endocytic trafficking from early endosomes to late endosomes and lysosomes. The chain is Syntaxin-7 (Stx7) from Rattus norvegicus (Rat).